The sequence spans 188 residues: Glandular kallikrein-3, submandibular (188 aa).

Residues 1-185 form the Peptidase S1 domain; the sequence is NYHVLLGQNN…FTSWIKEVMK (185 aa). N-linked (GlcNAc...) asparagine glycosylation is found at Asn-10 and Asn-36. Asp-47 serves as the catalytic Charge relay system. Cystine bridges form between Cys-79-Cys-146, Cys-111-Cys-125, and Cys-136-Cys-161. The active-site Charge relay system is Ser-140.

The protein belongs to the peptidase S1 family. Kallikrein subfamily.

The enzyme catalyses Preferential cleavage of Arg-|-Xaa bonds in small molecule substrates. Highly selective action to release kallidin (lysyl-bradykinin) from kininogen involves hydrolysis of Met-|-Xaa or Leu-|-Xaa.. Its function is as follows. Glandular kallikreins cleave Met-Lys and Arg-Ser bonds in kininogen to release Lys-bradykinin. The chain is Glandular kallikrein-3, submandibular (Klk3) from Rattus norvegicus (Rat).